Here is a 405-residue protein sequence, read N- to C-terminus: Argininosuccinate synthase (405 aa).

Residues 10 to 18 and alanine 37 each bind ATP; that span reads AYSGGLDTS. Residues tyrosine 88 and serine 93 each contribute to the L-citrulline site. An ATP-binding site is contributed by glycine 118. The L-aspartate site is built by threonine 120, asparagine 124, and aspartate 125. Asparagine 124 is a binding site for L-citrulline. L-citrulline-binding residues include arginine 128, serine 179, serine 188, glutamate 264, and tyrosine 276.

It belongs to the argininosuccinate synthase family. Type 1 subfamily. In terms of assembly, homotetramer.

The protein resides in the cytoplasm. The enzyme catalyses L-citrulline + L-aspartate + ATP = 2-(N(omega)-L-arginino)succinate + AMP + diphosphate + H(+). It functions in the pathway amino-acid biosynthesis; L-arginine biosynthesis; L-arginine from L-ornithine and carbamoyl phosphate: step 2/3. This Pseudomonas savastanoi pv. phaseolicola (strain 1448A / Race 6) (Pseudomonas syringae pv. phaseolicola (strain 1448A / Race 6)) protein is Argininosuccinate synthase.